Reading from the N-terminus, the 441-residue chain is Xylose isomerase (441 aa).

Residues H99 and D102 contribute to the active site. Mg(2+)-binding residues include E230, E266, H269, D294, D305, D307, and D337.

The protein belongs to the xylose isomerase family. As to quaternary structure, homotetramer. It depends on Mg(2+) as a cofactor.

It is found in the cytoplasm. The catalysed reaction is alpha-D-xylose = alpha-D-xylulofuranose. Functionally, exhibits xylose isomerase activity. The polypeptide is Xylose isomerase (xylA) (Bacillus sp. (strain LW2)).